The primary structure comprises 294 residues: Eukaryotic translation initiation factor 3 subunit G (294 aa).

2 disordered regions span residues 1-43 (MPSA…ENKI) and 160-211 (EDDG…RDET). The span at 194–211 (GANRRGETMPSRSQRDET) shows a compositional bias: basic and acidic residues. The RRM domain occupies 212-290 (ATIRVTNLSE…LILNVEWAKP (79 aa)).

Belongs to the eIF-3 subunit G family. In terms of assembly, component of the eukaryotic translation initiation factor 3 (eIF-3) complex.

Its subcellular location is the cytoplasm. RNA-binding component of the eukaryotic translation initiation factor 3 (eIF-3) complex, which is involved in protein synthesis of a specialized repertoire of mRNAs and, together with other initiation factors, stimulates binding of mRNA and methionyl-tRNAi to the 40S ribosome. The eIF-3 complex specifically targets and initiates translation of a subset of mRNAs involved in cell proliferation. This subunit can bind 18S rRNA. The protein is Eukaryotic translation initiation factor 3 subunit G of Nematostella vectensis (Starlet sea anemone).